The primary structure comprises 526 residues: NAD(P)H-quinone oxidoreductase chain 4 1 (526 aa).

The next 14 membrane-spanning stretches (helical) occupy residues 7–27, 35–55, 86–106, 114–134, 135–155, 168–188, 208–228, 242–262, 276–296, 310–330, 331–351, 374–396, 417–437, and 463–483; these read FPWL…IPLL, WYAL…FGWH, LSFP…VAAW, LFFF…LAQD, LLLF…LIAI, FILY…AMAF, ALQI…LPVF, SAPI…YGLI, FAPV…LAAL, IAHM…GLNG, ALLQ…LTGI, AFAL…GFVG, GIAL…LSML, and MAVA…PRLA.

Belongs to the complex I subunit 4 family.

It localises to the cellular thylakoid membrane. It carries out the reaction a plastoquinone + NADH + (n+1) H(+)(in) = a plastoquinol + NAD(+) + n H(+)(out). It catalyses the reaction a plastoquinone + NADPH + (n+1) H(+)(in) = a plastoquinol + NADP(+) + n H(+)(out). Functionally, NDH-1 shuttles electrons from NAD(P)H, via FMN and iron-sulfur (Fe-S) centers, to quinones in the respiratory chain. The immediate electron acceptor for the enzyme in this species is believed to be plastoquinone. Couples the redox reaction to proton translocation (for every two electrons transferred, four hydrogen ions are translocated across the cytoplasmic membrane), and thus conserves the redox energy in a proton gradient. In Synechococcus sp. (strain JA-3-3Ab) (Cyanobacteria bacterium Yellowstone A-Prime), this protein is NAD(P)H-quinone oxidoreductase chain 4 1.